Here is a 400-residue protein sequence, read N- to C-terminus: Argininosuccinate synthase (400 aa).

ATP-binding positions include 10–18 (AYSGGVDTS) and Ala-38. An L-citrulline-binding site is contributed by Tyr-89. Gly-119 is a binding site for ATP. Residues Thr-121, Asn-125, and Asp-126 each contribute to the L-aspartate site. Asn-125 contacts L-citrulline. Positions 129, 177, 186, 262, and 274 each coordinate L-citrulline.

Belongs to the argininosuccinate synthase family. Type 1 subfamily. As to quaternary structure, homotetramer.

The protein resides in the cytoplasm. The catalysed reaction is L-citrulline + L-aspartate + ATP = 2-(N(omega)-L-arginino)succinate + AMP + diphosphate + H(+). It participates in amino-acid biosynthesis; L-arginine biosynthesis; L-arginine from L-ornithine and carbamoyl phosphate: step 2/3. The polypeptide is Argininosuccinate synthase (Crocosphaera subtropica (strain ATCC 51142 / BH68) (Cyanothece sp. (strain ATCC 51142))).